A 283-amino-acid polypeptide reads, in one-letter code: NAD kinase (283 aa).

Asp-66 serves as the catalytic Proton acceptor. NAD(+) contacts are provided by residues 66 to 67, 140 to 141, Arg-151, Lys-168, Asp-170, 181 to 186, and Gln-240; these read DG, ND, and TGYCLS.

It belongs to the NAD kinase family. A divalent metal cation serves as cofactor.

It localises to the cytoplasm. It carries out the reaction NAD(+) + ATP = ADP + NADP(+) + H(+). In terms of biological role, involved in the regulation of the intracellular balance of NAD and NADP, and is a key enzyme in the biosynthesis of NADP. Catalyzes specifically the phosphorylation on 2'-hydroxyl of the adenosine moiety of NAD to yield NADP. The polypeptide is NAD kinase (Geobacter metallireducens (strain ATCC 53774 / DSM 7210 / GS-15)).